Consider the following 98-residue polypeptide: Small ribosomal subunit protein uS19 (98 aa).

A disordered region spans residues 77-98 (TRTFRGHAGGKAEKGGSAPKKK).

Belongs to the universal ribosomal protein uS19 family.

Protein S19 forms a complex with S13 that binds strongly to the 16S ribosomal RNA. The protein is Small ribosomal subunit protein uS19 of Chlorobium phaeobacteroides (strain DSM 266 / SMG 266 / 2430).